The sequence spans 732 residues: TIR domain-containing adapter molecule 1 (732 aa).

The tract at residues 1–153 (MDNPGPSLRG…CSSDIKGDPS (153 aa)) is TRIF-NTD. The short motif at 84–91 (EGPEEPPD) is the TRAF6-binding element. Residues 144 to 191 (CSSDIKGDPSGFQPLHSHQGSLQPPSASPAVTRSQPRPIDTPDWSWGH) form a disordered region. Residues 159–178 (HSHQGSLQPPSASPAVTRSQ) show a composition bias toward polar residues. The short motif at 206 to 209 (LEIS) is the pLxIS motif element. Phosphoserine is present on Ser-209. Lys-228 participates in a covalent cross-link: Glycyl lysine isopeptide (Lys-Gly) (interchain with G-Cter in ubiquitin). Short sequence motifs (TRAF6-binding) lie at residues 247–254 (QEPEEISW) and 296–306 (HCPIECTELST). Positions 305–331 (STNSRSPLTSTTESVGKQWPITSQRSP) are enriched in polar residues. The disordered stretch occupies residues 305-389 (STNSRSPLTS…TSTSPVLDHS (85 aa)). The span at 345 to 359 (SSSPPAQPPSLQASP) shows a compositional bias: low complexity. The 140-residue stretch at 395 to 534 (KFYNFVVIHA…KVANTFKTQK (140 aa)) folds into the TIR domain. Residues 514 to 713 (WLDEHSPIFA…SSDDKTECSE (200 aa)) are sufficient to induce apoptosis. 2 disordered regions span residues 603-679 (TPSW…GPQP) and 696-732 (MWGH…ETPE). Pro residues-rich tracts occupy residues 604 to 615 (PSWPGCPQPIPS) and 625 to 657 (PYSP…PPVS). A compositionally biased stretch (low complexity) spans 658-671 (SPQSQSFPSASSPA).

Homodimer. Found in a multi-helicase-TICAM1 complex at least composed of DHX36, DDX1, DDX21 and TICAM1; this complex exists in resting cells with or without poly(I:C) RNA ligand stimulation. Interacts (via TIR domain) with DDX21 (via C-terminus). Interacts (via TIR domain) with DHX36 (via C-terminus). Interacts with AZI2 and IRF7. Interacts (when phosphorylated) with IRF3; following activation and phosphorylation on the pLxIS motif by TBK1, recruits IRF3. Interacts with TICAM2 in TLR4 recruitment. Interaction with PIAS4 inhibits the TICAM1-induced NF-kappa-B, IRF and IFNB1 activation. Interacts with IKBKB and IKBKE. Interaction with SARM1 blocks TICAM1-dependent transcription factor activation. Interacts with TRAF3. Interacts with TRAFD1. Interacts with UBQLN1 (via UBA domain). Interacts with TBK1, TRAF6 and RIPK1 and these interactions are enhanced in the presence of WDFY1. Interacts (via the TIR domain) with TLR3 in response to poly(I:C) and this interaction is enhanced in the presence of WDFY1. Interacts with TLR4 in response to poly(I:C) in a WDFY1-dependent manner. Interacts with WDFY1 in response to poly(I:C). Interacts with TRIM56. Interacts (via the TIR domain) with TLR5. Interacts with TRIM8. Interacts with TAX1BP1 and TRIM32; these interactions target TICAM1 to TAX1BP1-mediated selective autophagic degradation. Interacts with DDX50. Phosphorylated by TBK1. Following activation, phosphorylated by TBK1 at Ser-209 in the pLxIS motif. The phosphorylated pLxIS motif constitutes an IRF3-binding motif, leading to recruitment of the transcription factor IRF3 to induce type-I interferons and other cytokines. Post-translationally, polyubiquitinated at Lys-228 by TRIM38 with 'Lys-48'-linked chains, leading to proteasomal degradation. Polyubiquitinated with 'Lys-6'- and 'Lys-33'-linked chains in a TRIM8-dependent manner; ubiquitination disrupts the interaction with TBK1 and subsequent interferon production.

It localises to the cytoplasm. Its subcellular location is the cytosol. It is found in the cytoplasmic vesicle. The protein localises to the autophagosome. The protein resides in the mitochondrion. Its function is as follows. Involved in innate immunity against invading pathogens. Adapter used by TLR3, TLR4 (through TICAM2) and TLR5 to mediate NF-kappa-B and interferon-regulatory factor (IRF) activation, and to induce apoptosis. Ligand binding to these receptors results in TRIF recruitment through its TIR domain. Distinct protein-interaction motifs allow recruitment of the effector proteins TBK1, TRAF6 and RIPK1, which in turn, lead to the activation of transcription factors IRF3 and IRF7, NF-kappa-B and FADD respectively. Phosphorylation by TBK1 on the pLxIS motif leads to recruitment and subsequent activation of the transcription factor IRF3 to induce expression of type I interferon and exert a potent immunity against invading pathogens. Component of a multi-helicase-TICAM1 complex that acts as a cytoplasmic sensor of viral double-stranded RNA (dsRNA) and plays a role in the activation of a cascade of antiviral responses including the induction of pro-inflammatory cytokines. In Mus musculus (Mouse), this protein is TIR domain-containing adapter molecule 1 (Ticam1).